Reading from the N-terminus, the 129-residue chain is Fluoride-specific ion channel FluC (129 aa).

The next 3 helical transmembrane spans lie at 20 to 40, 67 to 87, and 96 to 116; these read WFLG…TLAA, LLII…TAEI, and IMTA…MMLL. Positions 75 and 78 each coordinate Na(+).

This sequence belongs to the fluoride channel Fluc/FEX (TC 1.A.43) family.

The protein localises to the cell inner membrane. The catalysed reaction is fluoride(in) = fluoride(out). With respect to regulation, na(+) is not transported, but it plays an essential structural role and its presence is essential for fluoride channel function. Its function is as follows. Fluoride-specific ion channel. Important for reducing fluoride concentration in the cell, thus reducing its toxicity. The sequence is that of Fluoride-specific ion channel FluC from Desulfovibrio desulfuricans (strain ATCC 27774 / DSM 6949 / MB).